Consider the following 31-residue polypeptide: Cytochrome b6-f complex subunit 6 (31 aa).

The chain crosses the membrane as a helical span at residues 4–26; the sequence is ITSYFGFLLAASTITPALFIGLS.

The protein belongs to the PetL family. In terms of assembly, the 4 large subunits of the cytochrome b6-f complex are cytochrome b6, subunit IV (17 kDa polypeptide, PetD), cytochrome f and the Rieske protein, while the 4 small subunits are PetG, PetL, PetM and PetN. The complex functions as a dimer.

The protein resides in the plastid. It is found in the chloroplast thylakoid membrane. Its function is as follows. Component of the cytochrome b6-f complex, which mediates electron transfer between photosystem II (PSII) and photosystem I (PSI), cyclic electron flow around PSI, and state transitions. PetL is important for photoautotrophic growth as well as for electron transfer efficiency and stability of the cytochrome b6-f complex. In Buxus microphylla (Littleleaf boxwood), this protein is Cytochrome b6-f complex subunit 6.